The sequence spans 190 residues: Elongation factor P-like protein (190 aa).

This sequence belongs to the elongation factor P family.

In Erwinia tasmaniensis (strain DSM 17950 / CFBP 7177 / CIP 109463 / NCPPB 4357 / Et1/99), this protein is Elongation factor P-like protein.